We begin with the raw amino-acid sequence, 308 residues long: MKSKHVAVLLGGFSSERPVSLSSGKACADALENEGYQVTRVDVGRDVGSVLAELKPDVAFNALHGPFGEDGTIQGILEYLGIPYTHSGVLASALAMNKEQAKKIVKTVGVPVAESKVANRFAIQNKHPMKPPYVIKPVNEGSSFGVVIVSEGQSHPPQVVGSSEWKYGDTVMVERYIHGRELTCAVMGDVALGVCEIIPTGHSFYDYDSKYVAGGSKHECPAKVSPNIYQKIQTLALKAHQAVGCRGVSRSDFRYDDRHSENGEVVWLEVNTQPGMTPTSLVPEIAAHAGHSFGELLSWMVEDASCLR.

Residues 102-302 form the ATP-grasp domain; that stretch reads KKIVKTVGVP…FGELLSWMVE (201 aa). Position 128-183 (128-183) interacts with ATP; the sequence is PMKPPYVIKPVNEGSSFGVVIVSEGQSHPPQVVGSSEWKYGDTVMVERYIHGRELT. Mg(2+) contacts are provided by D252, E269, and N271.

Belongs to the D-alanine--D-alanine ligase family. Mg(2+) is required as a cofactor. Requires Mn(2+) as cofactor.

The protein resides in the cytoplasm. It carries out the reaction 2 D-alanine + ATP = D-alanyl-D-alanine + ADP + phosphate + H(+). It functions in the pathway cell wall biogenesis; peptidoglycan biosynthesis. In terms of biological role, cell wall formation. This is D-alanine--D-alanine ligase B from Mesorhizobium japonicum (strain LMG 29417 / CECT 9101 / MAFF 303099) (Mesorhizobium loti (strain MAFF 303099)).